We begin with the raw amino-acid sequence, 150 residues long: Cytochrome c oxidase subunit 5A, mitochondrial (150 aa).

The transit peptide at 1 to 41 directs the protein to the mitochondrion; that stretch reads MLGTALRRCAVAAASRAGPRGLQHPAPVPGPTAAIQSIRCY. The SIFI-degron motif lies at 2 to 17; it reads LGTALRRCAVAAASRA. Residues Lys-87 and Lys-113 each carry the N6-acetyllysine modification. Thr-141 carries the post-translational modification Phosphothreonine.

This sequence belongs to the cytochrome c oxidase subunit 5A family. As to quaternary structure, component of the cytochrome c oxidase (complex IV, CIV), a multisubunit enzyme composed of 14 subunits. The complex is composed of a catalytic core of 3 subunits MT-CO1, MT-CO2 and MT-CO3, encoded in the mitochondrial DNA, and 11 supernumerary subunits COX4I, COX5A, COX5B, COX6A, COX6B, COX6C, COX7A, COX7B, COX7C, COX8 and NDUFA4, which are encoded in the nuclear genome. The complex exists as a monomer or a dimer and forms supercomplexes (SCs) in the inner mitochondrial membrane with NADH-ubiquinone oxidoreductase (complex I, CI) and ubiquinol-cytochrome c oxidoreductase (cytochrome b-c1 complex, complex III, CIII), resulting in different assemblies (supercomplex SCI(1)III(2)IV(1) and megacomplex MCI(2)III(2)IV(2)). Interacts with AFG1L. Interacts with RAB5IF. Post-translationally, in response to mitochondrial stress, the precursor protein is ubiquitinated by the SIFI complex in the cytoplasm before mitochondrial import, leading to its degradation. Within the SIFI complex, UBR4 initiates ubiquitin chain that are further elongated or branched by KCMF1.

The protein localises to the mitochondrion inner membrane. The protein operates within energy metabolism; oxidative phosphorylation. In terms of biological role, component of the cytochrome c oxidase, the last enzyme in the mitochondrial electron transport chain which drives oxidative phosphorylation. The respiratory chain contains 3 multisubunit complexes succinate dehydrogenase (complex II, CII), ubiquinol-cytochrome c oxidoreductase (cytochrome b-c1 complex, complex III, CIII) and cytochrome c oxidase (complex IV, CIV), that cooperate to transfer electrons derived from NADH and succinate to molecular oxygen, creating an electrochemical gradient over the inner membrane that drives transmembrane transport and the ATP synthase. Cytochrome c oxidase is the component of the respiratory chain that catalyzes the reduction of oxygen to water. Electrons originating from reduced cytochrome c in the intermembrane space (IMS) are transferred via the dinuclear copper A center (CU(A)) of subunit 2 and heme A of subunit 1 to the active site in subunit 1, a binuclear center (BNC) formed by heme A3 and copper B (CU(B)). The BNC reduces molecular oxygen to 2 water molecules using 4 electrons from cytochrome c in the IMS and 4 protons from the mitochondrial matrix. In Nycticebus coucang (Slow loris), this protein is Cytochrome c oxidase subunit 5A, mitochondrial (COX5A).